The chain runs to 277 residues: Orotidine 5'-phosphate decarboxylase (277 aa).

Lysine 93 serves as the catalytic Proton donor.

Belongs to the OMP decarboxylase family. Type 2 subfamily.

It catalyses the reaction orotidine 5'-phosphate + H(+) = UMP + CO2. Its pathway is pyrimidine metabolism; UMP biosynthesis via de novo pathway; UMP from orotate: step 2/2. This chain is Orotidine 5'-phosphate decarboxylase, found in Haloarcula marismortui (strain ATCC 43049 / DSM 3752 / JCM 8966 / VKM B-1809) (Halobacterium marismortui).